The sequence spans 444 residues: MSEMTPREIVSELDSYIIGQNKAKRAVAIALRNRWRRMQLNEMLRHEVTPKNILMIGPTGVGKTEIARRLAKLANAPFIKVEATKFTEVGYVGKEVDSIIRDLTDAAIKMVRLQSIDKNRTRAEELAEERILDVLIPPAKNNWGQAEEHQEPSSARQAFRKKLREGQLDDKEIEIDLAAAPMGVEIMAPPGMEEMTNQLQSMFQNLGGQKQKPRKLKIKEAFKLLVEEEAAKLVNPEELKEQAIEAVEQHGIVFIDEIDKICKRGGQSSGPDVSREGVQRDLLPLVEGCTVSTKHGMVKTDHILFIASGAFQTASPSDLIPELQGRLPIRVELQALTTEDFERILTEPSASLTEQYKALMGTEGVNIEFTAEGIRRIAEAAWQVNESTENIGARRLHTVLERLMEDISYDASEINGQSITIDADYVRNHLDELVADEDLSRFIL.

ATP-binding positions include isoleucine 18, 60–65 (GVGKTE), aspartate 256, glutamate 322, and arginine 394.

Belongs to the ClpX chaperone family. HslU subfamily. In terms of assembly, a double ring-shaped homohexamer of HslV is capped on each side by a ring-shaped HslU homohexamer. The assembly of the HslU/HslV complex is dependent on binding of ATP.

It is found in the cytoplasm. ATPase subunit of a proteasome-like degradation complex; this subunit has chaperone activity. The binding of ATP and its subsequent hydrolysis by HslU are essential for unfolding of protein substrates subsequently hydrolyzed by HslV. HslU recognizes the N-terminal part of its protein substrates and unfolds these before they are guided to HslV for hydrolysis. The chain is ATP-dependent protease ATPase subunit HslU from Serratia proteamaculans (strain 568).